We begin with the raw amino-acid sequence, 115 residues long: Large ribosomal subunit protein bL20 (115 aa).

It belongs to the bacterial ribosomal protein bL20 family.

Its function is as follows. Binds directly to 23S ribosomal RNA and is necessary for the in vitro assembly process of the 50S ribosomal subunit. It is not involved in the protein synthesizing functions of that subunit. This Synechococcus sp. (strain WH7803) protein is Large ribosomal subunit protein bL20.